The following is a 475-amino-acid chain: MGITAATEMALRRHLVAQLDNQLGGTSYRSVLMYPEKMPRPPWRHETHNYIRSGPGPRFLDAPGQPAGMVAAVVSDGTTVAAGYLTGSGSRAALTSTGRSQLERIAGSRTPLTLDLDGLGRYRVLAAPSRNGHDVIVTGLSMGNVDATMLQMLIIFGIVTVIALVAATTAGIVIIKRALAPLRRVAQTASEVVDLPLDRGEVKLPVRVPEPDANPSTEVGQLGSALNRMLDHIAAALSARQASETCVRQFVADASHELRTPLAAIRGYTELTQRIGDDPEAVAHAMSRVASETERITRLVEDLLLLARLDSGRPLERGPVDMSRLAVDAVSDAHVAGPDHQWALDLPPEPVVIPGDAARLHQVVTNLLANARVHTGPGTIVTTRLSTGPTHVVLQVIDNGPGIPAALQSEVFERFARGDTSRSRQAGSTGLGLAIVSAVVKAHNGTITVSSSPGYTEFAVRLPLDGWQPLESSPR.

At 1-153 (MGITAATEMA…NVDATMLQML (153 aa)) the chain is on the extracellular side. Residues 154 to 174 (IIFGIVTVIALVAATTAGIVI) form a helical membrane-spanning segment. Residues 175–475 (IKRALAPLRR…GWQPLESSPR (301 aa)) are Cytoplasmic-facing. In terms of domain architecture, HAMP spans 176-238 (KRALAPLRRV…MLDHIAAALS (63 aa)). In terms of domain architecture, Histidine kinase spans 253-466 (DASHELRTPL…EFAVRLPLDG (214 aa)). A Phosphohistidine; by autocatalysis modification is found at His-256.

In terms of assembly, homodimer. Requires a divalent metal cation as cofactor. Autophosphorylated.

The protein resides in the cell membrane. It catalyses the reaction ATP + protein L-histidine = ADP + protein N-phospho-L-histidine.. Its function is as follows. Member of the two-component regulatory system TcrY/TcrX. Activates TcrX by phosphorylation. The protein is Probable sensor histidine kinase TcrY (tcrY) of Mycobacterium tuberculosis (strain ATCC 25618 / H37Rv).